We begin with the raw amino-acid sequence, 561 residues long: Asparagine synthetase [glutamine-hydrolyzing] (561 aa).

Catalysis depends on Cys2, which acts as the For GATase activity. Residues 2–191 (CGIWALFGSD…PGHYEVLDLK (190 aa)) form the Glutamine amidotransferase type-2 domain. L-glutamine contacts are provided by residues 49 to 53 (RLAVV), 75 to 77 (NGE), and Asp97. The region spanning 213 to 536 (HALYDNVEKL…PGRADWLSHY (324 aa)) is the Asparagine synthetase domain. ATP is bound by residues Leu256, Ile288, and 363–364 (SG). Lys385 bears the N6-acetyllysine mark. Thr545 is modified (phosphothreonine). Phosphoserine is present on Ser557.

It catalyses the reaction L-aspartate + L-glutamine + ATP + H2O = L-asparagine + L-glutamate + AMP + diphosphate + H(+). It functions in the pathway amino-acid biosynthesis; L-asparagine biosynthesis; L-asparagine from L-aspartate (L-Gln route): step 1/1. The protein is Asparagine synthetase [glutamine-hydrolyzing] (ASNS) of Pongo abelii (Sumatran orangutan).